The sequence spans 87 residues: Small ribosomal subunit protein bS18 (87 aa).

The segment covering 1-19 (MSTRSRARKRSRVRSRTRR) has biased composition (basic residues). The disordered stretch occupies residues 1–25 (MSTRSRARKRSRVRSRTRRKDPIFV).

Belongs to the bacterial ribosomal protein bS18 family. In terms of assembly, part of the 30S ribosomal subunit. Forms a tight heterodimer with protein bS6.

Its function is as follows. Binds as a heterodimer with protein bS6 to the central domain of the 16S rRNA, where it helps stabilize the platform of the 30S subunit. In Rhodopirellula baltica (strain DSM 10527 / NCIMB 13988 / SH1), this protein is Small ribosomal subunit protein bS18.